We begin with the raw amino-acid sequence, 302 residues long: Monopolin complex subunit MAM1 (302 aa).

Disordered regions lie at residues 53–83 (YHKE…QNNV) and 257–276 (TSEN…SKGK). A compositionally biased stretch (polar residues) spans 257–268 (TSENPFSSSPNT).

As to quaternary structure, component of the monopolin complex composed of at least CSM1, LRS4 and MAM1. The complex associates with the kinetochore during late pachytene. Post-translationally, phosphorylated by CDC5. This phosphorylation is required for the location to the kinetochores during late pachytene.

The protein localises to the nucleus. In terms of biological role, component of the monopolin complex which promotes monoorientation during meiosis I, required for chromosome segregation during meiosis. In Saccharomyces cerevisiae (strain ATCC 204508 / S288c) (Baker's yeast), this protein is Monopolin complex subunit MAM1 (MAM1).